The chain runs to 242 residues: MDVARDMEKNTTAMGQLMSSSATTAATATGPASPKRPAGRTKFQETRHPVFRGVRRRGRAGRWVCEVRVPGSRGDRLWVGTFDTAEEAARAHDAAMLALCGASASLNFADSAWLLHVPRAPVASGHDQLPDVQRAASEAVAEFQRRGSTAATATATSGDAASTAPPSSSPVLSPNDDNASSASTPAVAAALDHGDMFGGMRTDLYFASLAQGLLIEPPPPPTTAEGFCDDEGCGGAEMELWS.

Residues 20 to 29 show a composition bias toward low complexity; it reads SSATTAATAT. Residues 20-44 form a disordered region; that stretch reads SSATTAATATGPASPKRPAGRTKFQ. Positions 50 to 109 form a DNA-binding region, AP2/ERF; it reads VFRGVRRRGRAGRWVCEVRVPGSRGDRLWVGTFDTAEEAARAHDAAMLALCGASASLNFA. The segment at 143-184 is disordered; the sequence is FQRRGSTAATATATSGDAASTAPPSSSPVLSPNDDNASSAST. Positions 148-184 are enriched in low complexity; sequence STAATATATSGDAASTAPPSSSPVLSPNDDNASSAST.

Belongs to the AP2/ERF transcription factor family. ERF subfamily.

The protein localises to the nucleus. Transcriptional activator that binds specifically to the DNA sequence 5'-[AG]CCGAC-3'. Binding to the C-repeat/DRE element mediates high salinity- and dehydration-inducible transcription. The polypeptide is Dehydration-responsive element-binding protein 1J (DREB1J) (Oryza sativa subsp. japonica (Rice)).